A 139-amino-acid polypeptide reads, in one-letter code: Nucleoside diphosphate kinase (139 aa).

ATP-binding residues include Lys11, Phe59, Arg87, Thr93, Arg104, and Asn114. His117 (pros-phosphohistidine intermediate) is an active-site residue.

This sequence belongs to the NDK family. As to quaternary structure, homotetramer. It depends on Mg(2+) as a cofactor.

The protein resides in the cytoplasm. The catalysed reaction is a 2'-deoxyribonucleoside 5'-diphosphate + ATP = a 2'-deoxyribonucleoside 5'-triphosphate + ADP. It catalyses the reaction a ribonucleoside 5'-diphosphate + ATP = a ribonucleoside 5'-triphosphate + ADP. Functionally, major role in the synthesis of nucleoside triphosphates other than ATP. The ATP gamma phosphate is transferred to the NDP beta phosphate via a ping-pong mechanism, using a phosphorylated active-site intermediate. In Wolbachia sp. subsp. Drosophila simulans (strain wRi), this protein is Nucleoside diphosphate kinase.